The sequence spans 766 residues: Phospholipid phosphatase-related protein type 4 (766 aa).

S37 is subject to Phosphoserine. The next 3 membrane-spanning stretches (helical) occupy residues 68 to 88 (LPCF…SLYF), 120 to 140 (AIPF…TIMV), and 179 to 199 (FVGV…IIQL). N-linked (GlcNAc...) asparagine glycosylation is found at N215 and N220. The chain crosses the membrane as a helical span at residues 248–268 (SFPSQHATLAAFAAVYVSMYF). N269 carries N-linked (GlcNAc...) asparagine glycosylation. Helical transmembrane passes span 277–297 (KLLK…CGLT) and 309–329 (VYCG…YAVG). Residue S347 is modified to Phosphoserine. Residue N363 is glycosylated (N-linked (GlcNAc...) asparagine). Residue S386 is modified to Phosphoserine. An N-linked (GlcNAc...) asparagine glycan is attached at N433. Residue S439 is modified to Phosphoserine. A disordered region spans residues 454 to 494 (SKNESRKMSLQVMDTEPEGQSPPRSIEMRSSSEPSRVGVNG). N456 carries N-linked (GlcNAc...) asparagine glycosylation. Phosphoserine occurs at positions 462 and 474. N-linked (GlcNAc...) asparagine glycans are attached at residues N515, N545, and N570. The residue at position 608 (S608) is a Phosphoserine. 3 disordered regions span residues 634–654 (PIIQ…KWKA), 672–701 (DSES…HHHH), and 742–766 (ERSN…AYKD). Positions 672 to 697 (DSESCESLKDSFGSGDRKRSNIDSNE) are enriched in basic and acidic residues. Over residues 743 to 752 (RSNSPENTRN) the composition is skewed to polar residues.

It belongs to the PA-phosphatase related phosphoesterase family. In terms of processing, O-glycosylated. Probably at Ser-347. Brain-specific, it is exclusively expressed in neurons (at protein level).

Its subcellular location is the postsynaptic density membrane. Postsynaptic density membrane protein that indirectly regulates glutamatergic synaptic transmission through lysophosphatidic acid (LPA)-mediated signaling pathways. Binds lysophosphatidic acid (LPA) and mediates its internalization into cells. Could act as receptor or a transporter of this lipid at the post-synaptic membrane. Modulates lysophosphatidic acid (LPA) activity in neuron axonal outgrowth during development by attenuating phospholipid-induced axon collapse. This is Phospholipid phosphatase-related protein type 4 from Mus musculus (Mouse).